Here is a 239-residue protein sequence, read N- to C-terminus: ATP-dependent dethiobiotin synthetase BioD (239 aa).

15-20 (EIGKTF) provides a ligand contact to ATP. Thr19 provides a ligand contact to Mg(2+). Lys40 is a catalytic residue. ATP contacts are provided by residues Asp57, 118-121 (EGVG), and 178-179 (NH). Mg(2+) contacts are provided by Asp57 and Glu118.

It belongs to the dethiobiotin synthetase family. In terms of assembly, homodimer. Requires Mg(2+) as cofactor.

It is found in the cytoplasm. It catalyses the reaction (7R,8S)-7,8-diammoniononanoate + CO2 + ATP = (4R,5S)-dethiobiotin + ADP + phosphate + 3 H(+). It functions in the pathway cofactor biosynthesis; biotin biosynthesis; biotin from 7,8-diaminononanoate: step 1/2. Catalyzes a mechanistically unusual reaction, the ATP-dependent insertion of CO2 between the N7 and N8 nitrogen atoms of 7,8-diaminopelargonic acid (DAPA, also called 7,8-diammoniononanoate) to form a ureido ring. This is ATP-dependent dethiobiotin synthetase BioD from Burkholderia cenocepacia (strain ATCC BAA-245 / DSM 16553 / LMG 16656 / NCTC 13227 / J2315 / CF5610) (Burkholderia cepacia (strain J2315)).